Reading from the N-terminus, the 846-residue chain is Integrin beta-PS (846 aa).

The signal sequence occupies residues Met1–Ala28. Over Gln29–Met777 the chain is Extracellular. A disulfide bond links Cys46 and Cys55. Residue Asn72 is glycosylated (N-linked (GlcNAc...) asparagine). Positions Asp186 to Ile419 constitute a VWFA domain. The cysteines at positions 249 and 252 are disulfide-linked. Asn266 and Asn277 each carry an N-linked (GlcNAc...) asparagine glycan. Residues Cys300 and Cys341 are joined by a disulfide bond. Asn403 and Asn428 each carry an N-linked (GlcNAc...) asparagine glycan. Intrachain disulfides connect Cys441–Cys453, Cys473–Cys741, Cys507–Cys530, Cys522–Cys533, Cys535–Cys544, Cys546–Cys579, Cys561–Cys577, Cys571–Cys582, Cys584–Cys599, Cys601–Cys624, Cys606–Cys622, Cys614–Cys627, Cys629–Cys638, Cys640–Cys664, Cys647–Cys662, Cys656–Cys667, Cys669–Cys682, Cys685–Cys688, Cys692–Cys701, Cys698–Cys771, and Cys719–Cys749. 4 I-EGF domains span residues Cys507–Glu545, Cys546–Glu600, Cys601–Gly639, and Cys640–Glu683. Asn557 carries N-linked (GlcNAc...) asparagine glycosylation. A glycan (N-linked (GlcNAc...) asparagine) is linked at Asn603. N-linked (GlcNAc...) asparagine glycosylation is present at Asn644. A glycan (N-linked (GlcNAc...) asparagine) is linked at Asn718. A helical membrane pass occupies residues Leu778–Leu798. Residues Trp799–Lys846 lie on the Cytoplasmic side of the membrane. Phosphotyrosine occurs at positions 831 and 843.

Belongs to the integrin beta chain family. In terms of assembly, heterodimer of an alpha and a beta subunit. Beta-PS associates with either alpha-PS1, alpha-PS2, alpha-PS3, alpha-PS4 or alpha-PS5. In ovaries, strongly expressed in follicle cells. In oocytes, expressed in the forming dorsal appendages (at protein level). Expressed in the embryonic dorsal cuticle, the larval eye and the wing imaginal disk. In testes, detected at the interface between somatic hub cells and cyst stem cells.

The protein localises to the cell membrane. Its subcellular location is the apical cell membrane. The protein resides in the lateral cell membrane. It localises to the basal cell membrane. Its function is as follows. Integrin alpha-PS1/beta-PS is a receptor for laminin. Integrin alpha-PS2/beta-PS is a receptor for Tig, wb and Ten-m. Contributes to endodermal integrity and adhesion between the midgut epithelium and the surrounding visceral muscle. Essential for migration of the primordial midgut cells and for maintaining, but not establishing, cell polarity in the midgut epithelium. The two beta subunits mediate midgut migration by distinct mechanisms: beta-PS requires rhea/talin and Itgbn does not. Required for rhea/talin correct cellular localization in the midgut. Required for many embryonic (dorsal closure and somatic muscle attachments) and postembryonic developmental processes (attachment between cell layers of imaginal disks, organization of ommatidial arrays and flight muscle development). Involved in the function and/or development of the olfactory system. In the testes, essential for shv-dependent maintenance of somatic hub cells and their localization to the apical tip. Plays a role in timely border cell migration during oogenesis. This is Integrin beta-PS (mys) from Drosophila melanogaster (Fruit fly).